A 272-amino-acid chain; its full sequence is Putative MgpC-like protein MPN_366 (272 aa).

Disordered stretches follow at residues 65–84 and 171–196; these read QESQKALNGSQSGSSDTSGS and GSGQESSWNSQRSQKGLKTTPLPMPS. Over residues 72–84 the composition is skewed to low complexity; the sequence is NGSQSGSSDTSGS. Residues 173-187 are compositionally biased toward polar residues; it reads GQESSWNSQRSQKGL.

The protein belongs to the MgpC family.

The protein is Putative MgpC-like protein MPN_366 of Mycoplasma pneumoniae (strain ATCC 29342 / M129 / Subtype 1) (Mycoplasmoides pneumoniae).